We begin with the raw amino-acid sequence, 248 residues long: tRNA (guanine-N(1)-)-methyltransferase (248 aa).

S-adenosyl-L-methionine contacts are provided by residues Gly-113 and 133 to 138 (VGDYVL).

Belongs to the RNA methyltransferase TrmD family. In terms of assembly, homodimer.

It localises to the cytoplasm. It catalyses the reaction guanosine(37) in tRNA + S-adenosyl-L-methionine = N(1)-methylguanosine(37) in tRNA + S-adenosyl-L-homocysteine + H(+). Its function is as follows. Specifically methylates guanosine-37 in various tRNAs. This Shewanella sp. (strain W3-18-1) protein is tRNA (guanine-N(1)-)-methyltransferase.